Consider the following 232-residue polypeptide: Phosphatidylserine decarboxylase proenzyme (232 aa).

Residue S190 is the Schiff-base intermediate with substrate; via pyruvic acid of the active site. The residue at position 190 (S190) is a Pyruvic acid (Ser); by autocatalysis.

It belongs to the phosphatidylserine decarboxylase family. PSD-A subfamily. Heterodimer of a large membrane-associated beta subunit and a small pyruvoyl-containing alpha subunit. Pyruvate is required as a cofactor. Is synthesized initially as an inactive proenzyme. Formation of the active enzyme involves a self-maturation process in which the active site pyruvoyl group is generated from an internal serine residue via an autocatalytic post-translational modification. Two non-identical subunits are generated from the proenzyme in this reaction, and the pyruvate is formed at the N-terminus of the alpha chain, which is derived from the carboxyl end of the proenzyme. The post-translation cleavage follows an unusual pathway, termed non-hydrolytic serinolysis, in which the side chain hydroxyl group of the serine supplies its oxygen atom to form the C-terminus of the beta chain, while the remainder of the serine residue undergoes an oxidative deamination to produce ammonia and the pyruvoyl prosthetic group on the alpha chain.

The protein resides in the cell membrane. It catalyses the reaction a 1,2-diacyl-sn-glycero-3-phospho-L-serine + H(+) = a 1,2-diacyl-sn-glycero-3-phosphoethanolamine + CO2. It participates in phospholipid metabolism; phosphatidylethanolamine biosynthesis; phosphatidylethanolamine from CDP-diacylglycerol: step 2/2. In terms of biological role, catalyzes the formation of phosphatidylethanolamine (PtdEtn) from phosphatidylserine (PtdSer). This is Phosphatidylserine decarboxylase proenzyme from Rhodopseudomonas palustris (strain BisB18).